The chain runs to 213 residues: Glutamine amidotransferase-like class 1 domain-containing protein 1 (213 aa).

Positions 1–20 (MTSKPTCLIVASAASAGVSA) are cleaved as a signal peptide.

It belongs to the peptidase C56 family. Homotetramer. Component of the FERRY complex.

It localises to the secreted. The protein localises to the early endosome. Component of the FERRY complex (Five-subunit Endosomal Rab5 and RNA/ribosome intermediary). The FERRY complex directly interacts with mRNAs and RAB5A, and functions as a RAB5A effector involved in the localization and the distribution of specific mRNAs most likely by mediating their endosomal transport. The complex recruits mRNAs and ribosomes to early endosomes through direct mRNA-interaction. In Danio rerio (Zebrafish), this protein is Glutamine amidotransferase-like class 1 domain-containing protein 1.